A 339-amino-acid polypeptide reads, in one-letter code: MSASGLPFDDFRELIRNLPGPDLGAERAVREREVTLTKPAGSLGRLEEIVAWLATWTGKRTPQVNRPLVAVFAGNHGVTAKNITPFPPSVTAQMVENFAAGGAAINQICIANDLGLKVFDLALEHPTGDITEEAAMDEHTCAATMAFGMEAIAGGTDLLCIGEMGIGNTTIAAAIALALFGGTAEDWVGPGTGSTGELMQRKLAAVRQAVALHQPHLQDPLEVLRCLGGREIAAMAGAILAARMEKIPVIVDGFVASAAAAVLYAANPEAIDHCMFGHVSAEPGHRKLLAKMGKEPLLDLGMRLGEGTGAALAANIVKAAALCHSGMATFEQAGVSASK.

The Proton acceptor role is filled by glutamate 306.

The protein belongs to the CobT family.

It catalyses the reaction 5,6-dimethylbenzimidazole + nicotinate beta-D-ribonucleotide = alpha-ribazole 5'-phosphate + nicotinate + H(+). The protein operates within nucleoside biosynthesis; alpha-ribazole biosynthesis; alpha-ribazole from 5,6-dimethylbenzimidazole: step 1/2. Functionally, catalyzes the synthesis of alpha-ribazole-5'-phosphate from nicotinate mononucleotide (NAMN) and 5,6-dimethylbenzimidazole (DMB). In Brucella abortus (strain S19), this protein is Nicotinate-nucleotide--dimethylbenzimidazole phosphoribosyltransferase.